The sequence spans 351 residues: Heme A synthase (351 aa).

8 helical membrane passes run 17–37 (WLIL…ATRL), 103–123 (LIGL…WLGQ), 129–149 (LVGL…MVSS), 164–184 (LMTH…LWLD), 201–221 (AMAL…VAGL), 261–281 (FNHR…AWAF), 289–309 (EFAF…LTLV), and 316–336 (LALV…YTVW). H263 contacts heme. H320 is a heme binding site.

This sequence belongs to the COX15/CtaA family. Type 2 subfamily. Interacts with CtaB. Heme b serves as cofactor.

It is found in the cell membrane. It carries out the reaction Fe(II)-heme o + 2 A + H2O = Fe(II)-heme a + 2 AH2. It participates in porphyrin-containing compound metabolism; heme A biosynthesis; heme A from heme O: step 1/1. Catalyzes the conversion of heme O to heme A by two successive hydroxylations of the methyl group at C8. The first hydroxylation forms heme I, the second hydroxylation results in an unstable dihydroxymethyl group, which spontaneously dehydrates, resulting in the formyl group of heme A. The chain is Heme A synthase from Hyphomonas neptunium (strain ATCC 15444).